The chain runs to 160 residues: Putative UPF0479 protein YLR466C-A (160 aa).

Transmembrane regions (helical) follow at residues 39–59 and 136–156; these read IVFC…KVLQ and VPMI…ISQH.

The protein belongs to the UPF0479 family.

The protein localises to the membrane. This is Putative UPF0479 protein YLR466C-A from Saccharomyces cerevisiae (strain ATCC 204508 / S288c) (Baker's yeast).